The chain runs to 453 residues: tRNA modification GTPase MnmE (453 aa).

Residues Arg22, Glu79, and Lys119 each coordinate (6S)-5-formyl-5,6,7,8-tetrahydrofolate. Residues 215–376 (GMKVVIAGRP…LKQHLKSLMG (162 aa)) form the TrmE-type G domain. A K(+)-binding site is contributed by Asn225. GTP contacts are provided by residues 225 to 230 (NAGKSS), 244 to 250 (TEIAGTT), 269 to 272 (DTAG), and 334 to 337 (NKAD). A Mg(2+)-binding site is contributed by Ser229. K(+)-binding residues include Thr244, Ile246, and Thr249. Residue Thr250 participates in Mg(2+) binding. Lys453 is a (6S)-5-formyl-5,6,7,8-tetrahydrofolate binding site.

The protein belongs to the TRAFAC class TrmE-Era-EngA-EngB-Septin-like GTPase superfamily. TrmE GTPase family. Homodimer. Heterotetramer of two MnmE and two MnmG subunits. The cofactor is K(+).

Its subcellular location is the cytoplasm. In terms of biological role, exhibits a very high intrinsic GTPase hydrolysis rate. Involved in the addition of a carboxymethylaminomethyl (cmnm) group at the wobble position (U34) of certain tRNAs, forming tRNA-cmnm(5)s(2)U34. The chain is tRNA modification GTPase MnmE from Shewanella baltica (strain OS195).